The following is a 232-amino-acid chain: Translation initiation factor IF-3 (232 aa).

Disordered stretches follow at residues 1–21 and 184–232; these read MAIQHRDPRGGGGSRDARTNR and LQSQ…AAQR. A compositionally biased stretch (low complexity) spans 193–208; it reads AAAAAAPAAAPAAGAP. The segment covering 209–222 has biased composition (pro residues); sequence APTPAPAPAAPAPA. Residues 223–232 are compositionally biased toward low complexity; the sequence is PAAADPAAQR.

This sequence belongs to the IF-3 family. As to quaternary structure, monomer.

Its subcellular location is the cytoplasm. In terms of biological role, IF-3 binds to the 30S ribosomal subunit and shifts the equilibrium between 70S ribosomes and their 50S and 30S subunits in favor of the free subunits, thus enhancing the availability of 30S subunits on which protein synthesis initiation begins. This is Translation initiation factor IF-3 from Anaeromyxobacter sp. (strain K).